Reading from the N-terminus, the 406-residue chain is Argininosuccinate synthase (406 aa).

Residues 13–21 (AYSGGLDTS) and alanine 40 each bind ATP. Residues tyrosine 91 and serine 96 each coordinate L-citrulline. Glycine 121 serves as a coordination point for ATP. Residues threonine 123, asparagine 127, and aspartate 128 each contribute to the L-aspartate site. L-citrulline is bound at residue asparagine 127. Positions 131, 182, 191, 267, and 279 each coordinate L-citrulline.

The protein belongs to the argininosuccinate synthase family. Type 1 subfamily. Homotetramer.

The protein resides in the cytoplasm. The enzyme catalyses L-citrulline + L-aspartate + ATP = 2-(N(omega)-L-arginino)succinate + AMP + diphosphate + H(+). Its pathway is amino-acid biosynthesis; L-arginine biosynthesis; L-arginine from L-ornithine and carbamoyl phosphate: step 2/3. This Brucella abortus (strain S19) protein is Argininosuccinate synthase.